Here is a 284-residue protein sequence, read N- to C-terminus: Probable plastid-lipid-associated protein 10, chloroplastic (284 aa).

A chloroplast-targeting transit peptide spans 1–40 (MDRIASATFSCPAISLSRVCRISPFGLNIKTNHRKRFSCR).

It belongs to the PAP/fibrillin family.

It localises to the plastid. Its subcellular location is the chloroplast. The protein resides in the plastoglobule. This Arabidopsis thaliana (Mouse-ear cress) protein is Probable plastid-lipid-associated protein 10, chloroplastic (PAP10).